The following is a 435-amino-acid chain: Serine--tRNA ligase (435 aa).

241–243 (TAE) lines the L-serine pocket. 272–274 (RSE) lines the ATP pocket. Position 295 (Glu-295) interacts with L-serine. 359-362 (EISS) serves as a coordination point for ATP. Ser-395 lines the L-serine pocket.

Belongs to the class-II aminoacyl-tRNA synthetase family. Type-1 seryl-tRNA synthetase subfamily. In terms of assembly, homodimer. The tRNA molecule binds across the dimer.

Its subcellular location is the cytoplasm. It catalyses the reaction tRNA(Ser) + L-serine + ATP = L-seryl-tRNA(Ser) + AMP + diphosphate + H(+). It carries out the reaction tRNA(Sec) + L-serine + ATP = L-seryl-tRNA(Sec) + AMP + diphosphate + H(+). It functions in the pathway aminoacyl-tRNA biosynthesis; selenocysteinyl-tRNA(Sec) biosynthesis; L-seryl-tRNA(Sec) from L-serine and tRNA(Sec): step 1/1. Its function is as follows. Catalyzes the attachment of serine to tRNA(Ser). Is also able to aminoacylate tRNA(Sec) with serine, to form the misacylated tRNA L-seryl-tRNA(Sec), which will be further converted into selenocysteinyl-tRNA(Sec). This is Serine--tRNA ligase from Actinobacillus pleuropneumoniae serotype 5b (strain L20).